The following is a 163-amino-acid chain: Protein MATERNALLY EXPRESSED GENE 5 (163 aa).

An RRM domain is found at 38-117; it reads STLYIEGLPA…DDVNVSAPAE (80 aa). Disulfide bonds link cysteine 140–cysteine 162 and cysteine 143–cysteine 151.

It belongs to the MEG family. Ubiquitous.

The polypeptide is Protein MATERNALLY EXPRESSED GENE 5 (MEG5) (Zea mays (Maize)).